Here is a 255-residue protein sequence, read N- to C-terminus: 4-hydroxy-tetrahydrodipicolinate reductase (255 aa).

Residues 8-13, 89-91, and 114-117 contribute to the NAD(+) site; these read GASGRM, GTT, and SSNY. Catalysis depends on His-146, which acts as the Proton donor/acceptor. His-147 serves as a coordination point for (S)-2,3,4,5-tetrahydrodipicolinate. Lys-150 functions as the Proton donor in the catalytic mechanism. 156–157 provides a ligand contact to (S)-2,3,4,5-tetrahydrodipicolinate; that stretch reads GT.

This sequence belongs to the DapB family.

It is found in the cytoplasm. The enzyme catalyses (S)-2,3,4,5-tetrahydrodipicolinate + NAD(+) + H2O = (2S,4S)-4-hydroxy-2,3,4,5-tetrahydrodipicolinate + NADH + H(+). It catalyses the reaction (S)-2,3,4,5-tetrahydrodipicolinate + NADP(+) + H2O = (2S,4S)-4-hydroxy-2,3,4,5-tetrahydrodipicolinate + NADPH + H(+). It functions in the pathway amino-acid biosynthesis; L-lysine biosynthesis via DAP pathway; (S)-tetrahydrodipicolinate from L-aspartate: step 4/4. In terms of biological role, catalyzes the conversion of 4-hydroxy-tetrahydrodipicolinate (HTPA) to tetrahydrodipicolinate. The chain is 4-hydroxy-tetrahydrodipicolinate reductase from Methanoregula boonei (strain DSM 21154 / JCM 14090 / 6A8).